The primary structure comprises 529 residues: PTS system alpha-glucoside-specific EIICB component (529 aa).

The PTS EIIC type-1 domain occupies 1–416; it reads MMKKVQRFGG…MDLKTPGRED (416 aa). The next 12 membrane-spanning stretches (helical) occupy residues 8–28, 59–79, 91–111, 130–150, 170–190, 198–218, 222–242, 272–292, 304–324, 328–348, 352–372, and 380–400; these read FGGAMMAPVLLFAFTGIVVGL, GWTVFRQMPILFAIGLPISLA, FALYTTFNYFVAAILKVFYGI, VPTLDTNLFGGILIAALVVYL, VFVYIVGFVVMIPCAFLTVLI, ISALQGFMKASGIFGVWIYTF, ILIPTGLHHFVYTPFVFGPAA, GGFALHGNSKIFGAPGIALAM, VAALLIPIIFTAVISGITEPL, FLFIAPVLFAVHACLAATMAA, AFGVVGNMGGGLLDFFFLNWI, and GTVIAQIVIGLIFTAIYFVVF. A PTS EIIB type-1 domain is found at 450-529; that stretch reads AQKGAIILEA…ERIEEMMKKG (80 aa). The active-site Phosphocysteine intermediate; for EIIB activity is C472.

Its subcellular location is the cell membrane. Functionally, the phosphoenolpyruvate-dependent sugar phosphotransferase system (sugar PTS), a major carbohydrate active -transport system, catalyzes the phosphorylation of incoming sugar substrates concomitantly with their translocation across the cell membrane. This system is probably involved in transport of the alpha-glucosides trehalulose, turanose, maltulose and palatinose. In Leptotrichia buccalis (strain ATCC 14201 / DSM 1135 / JCM 12969 / NCTC 10249 / C-1013-b), this protein is PTS system alpha-glucoside-specific EIICB component.